A 212-amino-acid polypeptide reads, in one-letter code: ATP-dependent Clp protease proteolytic subunit (212 aa).

Catalysis depends on serine 114, which acts as the Nucleophile. The active site involves histidine 139.

This sequence belongs to the peptidase S14 family. Fourteen ClpP subunits assemble into 2 heptameric rings which stack back to back to give a disk-like structure with a central cavity, resembling the structure of eukaryotic proteasomes.

Its subcellular location is the cytoplasm. It catalyses the reaction Hydrolysis of proteins to small peptides in the presence of ATP and magnesium. alpha-casein is the usual test substrate. In the absence of ATP, only oligopeptides shorter than five residues are hydrolyzed (such as succinyl-Leu-Tyr-|-NHMec, and Leu-Tyr-Leu-|-Tyr-Trp, in which cleavage of the -Tyr-|-Leu- and -Tyr-|-Trp bonds also occurs).. Cleaves peptides in various proteins in a process that requires ATP hydrolysis. Has a chymotrypsin-like activity. Plays a major role in the degradation of misfolded proteins. In Aromatoleum aromaticum (strain DSM 19018 / LMG 30748 / EbN1) (Azoarcus sp. (strain EbN1)), this protein is ATP-dependent Clp protease proteolytic subunit.